A 471-amino-acid polypeptide reads, in one-letter code: Mitochondrial distribution and morphology protein 10 (471 aa).

Positions 313-338 (SNSAATPPRIKNSDSQVLSNNSTDSK) are disordered. Polar residues predominate over residues 325–338 (SDSQVLSNNSTDSK).

This sequence belongs to the MDM10 family. As to quaternary structure, component of the ER-mitochondria encounter structure (ERMES) or MDM complex, composed of MMM1, MDM10, MDM12 and MDM34. Associates with the mitochondrial outer membrane sorting assembly machinery SAM(core) complex.

It localises to the mitochondrion outer membrane. Component of the ERMES/MDM complex, which serves as a molecular tether to connect the endoplasmic reticulum and mitochondria. Components of this complex are involved in the control of mitochondrial shape and protein biogenesis and may function in phospholipid exchange. MDM10 is involved in the late assembly steps of the general translocase of the mitochondrial outer membrane (TOM complex). Functions in the TOM40-specific route of the assembly of outer membrane beta-barrel proteins, including the association of TOM40 with the receptor TOM22 and small TOM proteins. Can associate with the SAM(core) complex as well as the MDM12-MMM1 complex, both involved in late steps of the major beta-barrel assembly pathway, that is responsible for biogenesis of all outer membrane beta-barrel proteins. May act as a switch that shuttles between both complexes and channels precursor proteins into the TOM40-specific pathway. Plays a role in mitochondrial morphology and in the inheritance of mitochondria. The protein is Mitochondrial distribution and morphology protein 10 of Debaryomyces hansenii (strain ATCC 36239 / CBS 767 / BCRC 21394 / JCM 1990 / NBRC 0083 / IGC 2968) (Yeast).